We begin with the raw amino-acid sequence, 606 residues long: NADH-ubiquinone oxidoreductase chain 5 (606 aa).

16 consecutive transmembrane segments (helical) span residues 4-24 (FSSL…SSIL), 38-58 (NIIS…IHSG), 87-107 (MIFV…SLWY), 117-137 (FFKY…ANNL), 140-160 (LFIG…WWYG), 171-191 (AILY…WFLF), 211-233 (LPLL…HPWL), 241-261 (TPVS…FLLI), 273-293 (IQSL…ICAL), 301-320 (IIAF…IGIN), 325-347 (AFLH…GSII), 366-386 (MPFT…MPFL), 413-433 (LIAT…ALLG), 457-477 (LLIG…PTTI), 488-508 (LTAL…SLIT), and 584-604 (IKLY…LFNL).

The protein belongs to the complex I subunit 5 family. As to quaternary structure, core subunit of respiratory chain NADH dehydrogenase (Complex I) which is composed of 45 different subunits.

Its subcellular location is the mitochondrion inner membrane. The enzyme catalyses a ubiquinone + NADH + 5 H(+)(in) = a ubiquinol + NAD(+) + 4 H(+)(out). In terms of biological role, core subunit of the mitochondrial membrane respiratory chain NADH dehydrogenase (Complex I) which catalyzes electron transfer from NADH through the respiratory chain, using ubiquinone as an electron acceptor. Essential for the catalytic activity and assembly of complex I. This chain is NADH-ubiquinone oxidoreductase chain 5 (MT-ND5), found in Equus asinus (Donkey).